Reading from the N-terminus, the 30-residue chain is Kalata-B17 (30 aa).

Positions 1–30 (GIPCAESCVYIPCTITALLGCKCKDQVCYN) form a cross-link, cyclopeptide (Gly-Asn). Intrachain disulfides connect Cys4–Cys21, Cys8–Cys23, and Cys13–Cys28.

Post-translationally, this is a cyclic peptide.

In terms of biological role, probably participates in a plant defense mechanism. The chain is Kalata-B17 from Oldenlandia affinis.